Here is a 284-residue protein sequence, read N- to C-terminus: MDAIKKKMLAMKMEKEVATDKAEQTEQSLRDLEAAKNTIEEDLSTLQKKYSNLENDFDNAKENLTVANTNLEASEKRVNECESEIQGLNRRIQLLEEDLERSEERLTSAQSKLEDASKAADESERGRKVLENRSQGDEERIDLLEKQLEEAKWIAEDADRKFDEAARKLAITEVDLERAEARLEAAEAKIVELEEELKVVGNNMKSLEISEQEASQREDSYEETIRDLTHRLKEAENRAAEAERTVSKLQKEVDRLEDELLAEKERYKSISDELDQTFAELAGY.

Residues 15-273 (KEVATDKAEQ…KERYKSISDE (259 aa)) adopt a coiled-coil conformation. The segment at 103–136 (EERLTSAQSKLEDASKAADESERGRKVLENRSQG) is disordered.

This sequence belongs to the tropomyosin family. As to quaternary structure, homodimer. Post-translationally, the N-terminus is blocked. Expressed in mantle muscle (at protein level).

Tropomyosin, in association with the troponin complex, plays a central role in the calcium dependent regulation of muscle contraction. This Todarodes pacificus (Japanese flying squid) protein is Tropomyosin Tod p 1.0102.